The primary structure comprises 1942 residues: Myosin-2 (1942 aa).

The Myosin N-terminal SH3-like domain maps to 33–82; the sequence is DAKTSVFVAEPKESFVKGTIQSKDAGKVTVKTEAGATLTVKEDQIFPMNP. Phosphothreonine occurs at positions 64 and 69. In terms of domain architecture, Myosin motor spans 86–785; it reads DKIEDMAMMT…LLGLLEEMRD (700 aa). ATP is bound at residue 179-186; the sequence is GESGAGKT. At Tyr389 the chain carries Phosphotyrosine. At Thr419 the chain carries Phosphothreonine. At Ser625 the chain carries Phosphoserine. The tract at residues 662 to 684 is actin-binding; the sequence is LNKLMTNLRSTHPHFVRCIIPNE. The residue at position 760 (His760) is a Pros-methylhistidine. The 30-residue stretch at 788–817 folds into the IQ domain; that stretch reads LAQLITRTQAMCRGFLARVEYQKMVERRES. Residues 849-1930 are a coiled coil; it reads SAETEKEMAT…ESQVNKLRVK (1082 aa). Ser1095 and Ser1099 each carry phosphoserine. The interval 1130-1175 is disordered; it reads EAERASRAKAEKQRSDLSRELEEISERLEEAGGATSAQIEMNKKRE. Over residues 1131-1159 the composition is skewed to basic and acidic residues; it reads AERASRAKAEKQRSDLSRELEEISERLEE. Residues Ser1165 and Ser1240 each carry the phosphoserine modification. Thr1244 carries the phosphothreonine modification. Residue Ser1246 is modified to Phosphoserine. Thr1258 is modified (phosphothreonine). Residue Ser1264 is modified to Phosphoserine. At Thr1289 the chain carries Phosphothreonine. Phosphoserine occurs at positions 1291, 1295, 1306, and 1309. A Phosphotyrosine modification is found at Tyr1467. At Thr1470 the chain carries Phosphothreonine. Ser1477 carries the phosphoserine modification. Position 1495 is a phosphotyrosine (Tyr1495). Phosphoserine is present on Ser1498. Residue Thr1504 is modified to Phosphothreonine. At Ser1517 the chain carries Phosphoserine. A Phosphothreonine modification is found at Thr1520. Phosphoserine occurs at positions 1557, 1577, 1603, 1606, 1717, and 1729. A phosphothreonine mark is found at Thr1733 and Thr1739. Position 1742 is a phosphoserine (Ser1742).

Belongs to the TRAFAC class myosin-kinesin ATPase superfamily. Myosin family. In terms of assembly, muscle myosin is a hexameric protein that consists of 2 heavy chain subunits (MHC), 2 alkali light chain subunits (MLC) and 2 regulatory light chain subunits (MLC-2). Interacts with GCSAM. Expressed in type 2a myofibers in the tibialis anterior and soleus muscles (at protein level).

It is found in the cytoplasm. Its subcellular location is the myofibril. Its function is as follows. Myosins are actin-based motor molecules with ATPase activity essential for muscle contraction. This is Myosin-2 from Mus musculus (Mouse).